A 458-amino-acid chain; its full sequence is Argininosuccinate lyase (458 aa).

The protein belongs to the lyase 1 family. Argininosuccinate lyase subfamily.

Its subcellular location is the cytoplasm. It carries out the reaction 2-(N(omega)-L-arginino)succinate = fumarate + L-arginine. It participates in amino-acid biosynthesis; L-arginine biosynthesis; L-arginine from L-ornithine and carbamoyl phosphate: step 3/3. This chain is Argininosuccinate lyase, found in Neisseria meningitidis serogroup C / serotype 2a (strain ATCC 700532 / DSM 15464 / FAM18).